The chain runs to 393 residues: S-adenosylmethionine synthase 4 (393 aa).

Position 9 (E9) interacts with Mg(2+). Position 15 (H15) interacts with ATP. E43 lines the K(+) pocket. L-methionine-binding residues include E56 and Q99. Residues 167–169, 235–238, D246, 252–253, A269, K273, and K277 contribute to the ATP site; these read DGK, SGRF, and RK. D246 lines the L-methionine pocket. K277 contributes to the L-methionine binding site.

This sequence belongs to the AdoMet synthase family. In terms of assembly, homotetramer. It depends on Mn(2+) as a cofactor. The cofactor is Mg(2+). Co(2+) serves as cofactor. K(+) is required as a cofactor.

The protein localises to the cytoplasm. The enzyme catalyses L-methionine + ATP + H2O = S-adenosyl-L-methionine + phosphate + diphosphate. The protein operates within amino-acid biosynthesis; S-adenosyl-L-methionine biosynthesis; S-adenosyl-L-methionine from L-methionine: step 1/1. Catalyzes the formation of S-adenosylmethionine from methionine and ATP. The reaction comprises two steps that are both catalyzed by the same enzyme: formation of S-adenosylmethionine (AdoMet) and triphosphate, and subsequent hydrolysis of the triphosphate. This Vitis vinifera (Grape) protein is S-adenosylmethionine synthase 4 (METK4).